Reading from the N-terminus, the 454-residue chain is Asparagine--tRNA ligase (454 aa).

Belongs to the class-II aminoacyl-tRNA synthetase family. In terms of assembly, homodimer.

It localises to the cytoplasm. It carries out the reaction tRNA(Asn) + L-asparagine + ATP = L-asparaginyl-tRNA(Asn) + AMP + diphosphate + H(+). This Ureaplasma urealyticum serovar 10 (strain ATCC 33699 / Western) protein is Asparagine--tRNA ligase.